A 439-amino-acid chain; its full sequence is Glutamyl-tRNA reductase (439 aa).

Residues 46-49 (TCNR), Ser111, 116-118 (EGE), and Gln122 contribute to the substrate site. The Nucleophile role is filled by Cys47. 191–196 (GTGAYA) lines the NADP(+) pocket.

Belongs to the glutamyl-tRNA reductase family. As to quaternary structure, homodimer.

It carries out the reaction (S)-4-amino-5-oxopentanoate + tRNA(Glu) + NADP(+) = L-glutamyl-tRNA(Glu) + NADPH + H(+). It functions in the pathway porphyrin-containing compound metabolism; protoporphyrin-IX biosynthesis; 5-aminolevulinate from L-glutamyl-tRNA(Glu): step 1/2. In terms of biological role, catalyzes the NADPH-dependent reduction of glutamyl-tRNA(Glu) to glutamate 1-semialdehyde (GSA). This is Glutamyl-tRNA reductase from Clavibacter michiganensis subsp. michiganensis (strain NCPPB 382).